The primary structure comprises 405 residues: uncharacterized protein (405 aa).

This is an uncharacterized protein from Saimiri sciureus (Common squirrel monkey).